The following is a 413-amino-acid chain: ATP phosphoribosyltransferase regulatory subunit (413 aa).

Residues Met-1–Pro-21 form a disordered region.

The protein belongs to the class-II aminoacyl-tRNA synthetase family. HisZ subfamily. Heteromultimer composed of HisG and HisZ subunits.

The protein localises to the cytoplasm. The protein operates within amino-acid biosynthesis; L-histidine biosynthesis; L-histidine from 5-phospho-alpha-D-ribose 1-diphosphate: step 1/9. Functionally, required for the first step of histidine biosynthesis. May allow the feedback regulation of ATP phosphoribosyltransferase activity by histidine. This is ATP phosphoribosyltransferase regulatory subunit from Rubrobacter xylanophilus (strain DSM 9941 / JCM 11954 / NBRC 16129 / PRD-1).